A 345-amino-acid polypeptide reads, in one-letter code: Phenylalanine--tRNA ligase alpha subunit (345 aa).

Glutamate 259 serves as a coordination point for Mg(2+).

The protein belongs to the class-II aminoacyl-tRNA synthetase family. Phe-tRNA synthetase alpha subunit type 1 subfamily. Tetramer of two alpha and two beta subunits. It depends on Mg(2+) as a cofactor.

The protein localises to the cytoplasm. The catalysed reaction is tRNA(Phe) + L-phenylalanine + ATP = L-phenylalanyl-tRNA(Phe) + AMP + diphosphate + H(+). The chain is Phenylalanine--tRNA ligase alpha subunit from Lactococcus lactis subsp. cremoris (strain SK11).